A 222-amino-acid chain; its full sequence is Cysteine protease inhibitor 9 (222 aa).

The N-terminal stretch at 1–26 (MKSINILSFLLLSSTLSLVAFARSFS) is a signal peptide. The propeptide occupies 27–42 (SENPIVLPSTCHDDDN). A Vacuolar targeting signal motif is present at residues 29–34 (NPIVLP). Cystine bridges form between Cys84–Cys136 and Cys185–Cys191.

Belongs to the protease inhibitor I3 (leguminous Kunitz-type inhibitor) family. Tuber.

The protein resides in the vacuole. In terms of biological role, putative inhibitor of cysteine proteases. Does not inhibit papain. May protect the plant by inhibiting proteases of invading organisms. In Solanum tuberosum (Potato), this protein is Cysteine protease inhibitor 9.